Reading from the N-terminus, the 383-residue chain is MASLDSLVSFFLSTLFVTIVSSQTQCRNLESIISFGDSITDTGNLVGLSDRNHLPVTAFLPYGETFFHHPTGRSCNGRIIIDFIAEFLGLPHVPPFYGSKNGNFEKGVNFAVAGATALETSILEKRGIYYPHSNISLGIQLKTFKESLPNLCGSPTDCRDMIGNAFIIMGEIGGNDFNFAFFVNKTSEVKELVPLVITKISSAIVELVDMGGRTFLVPGNFPLGCSATYLTLYQTSNKEEYDPLTGCLTWLNDFSEYYNEKLQAELNRLSKLYPHVNIIYGDYFNALLRLYQEPSKFGFMDRPLPACCGLGGPYNFTLSKKCGSVGVKYCSDPSKYVNWDGVHMTEAAYKWIADGLLKGPYTIPSFHWLCLGSKIKSKESLDT.

Residues 1–22 (MASLDSLVSFFLSTLFVTIVSS) form the signal peptide. Catalysis depends on S38, which acts as the Nucleophile. N-linked (GlcNAc...) asparagine glycosylation is found at N134, N184, and N315. Active-site residues include D340 and H343.

It belongs to the 'GDSL' lipolytic enzyme family.

Its subcellular location is the secreted. In Arabidopsis thaliana (Mouse-ear cress), this protein is GDSL esterase/lipase At1g28610.